Here is a 611-residue protein sequence, read N- to C-terminus: Serine protease FAM111A (611 aa).

A PIP-box motif is present at residues 16-28 (KCNMKIEHYFSPV). Lys-20 is covalently cross-linked (Glycyl lysine isopeptide (Lys-Gly) (interchain with G-Cter in SUMO2)). At Ser-26 the chain carries Phosphoserine. Residues Lys-30 and Lys-65 each participate in a glycyl lysine isopeptide (Lys-Gly) (interchain with G-Cter in SUMO2) cross-link. Residues 44 to 73 (ESRGDPRATTNTQAQRFHSPKKNPEDQTMP) form a disordered region. Residues 336-611 (KVTKNSSSIK…DVEMMSDEDL (276 aa)) form an interaction with SV40 large T antigen region. Active-site charge relay system residues include His-385, Asp-439, and Ser-541.

The protein belongs to the FAM111 family. In terms of assembly, interacts (via PIP-box) with PCNA; then interaction is direct. (Microbial infection) Interacts with SV40 virus large T antigen and this interaction is required for efficient viral replication and sustained viral gene expression in restrictive cell types. As to quaternary structure, (Microbial infection) Interacts with vaccinia virus protein OPG079; this interaction promotes the degradation of OPG079. Autocatalytically cleaved; activating the protein. Autocatalytic cleavage takes place in trans.

It is found in the nucleus. It localises to the chromosome. The protein localises to the cytoplasm. Its function is as follows. Single-stranded DNA-binding serine protease that mediates the proteolytic cleavage of covalent DNA-protein cross-links (DPCs) during DNA synthesis, thereby playing a key role in maintaining genomic integrity. DPCs are highly toxic DNA lesions that interfere with essential chromatin transactions, such as replication and transcription, and which are induced by reactive agents, such as UV light or formaldehyde. Protects replication fork from stalling by removing DPCs, such as covalently trapped topoisomerase 1 (TOP1) adducts on DNA lesion, or poly(ADP-ribose) polymerase 1 (PARP1)-DNA complexes trapped by PARP inhibitors. Required for PCNA loading on replication sites. Promotes S-phase entry and DNA synthesis. Also acts as a restriction factor for some viruses including SV40 polyomavirus and vaccinia virus. Mechanistically, affects nuclear barrier function during viral replication by mediating the disruption of the nuclear pore complex (NPC) via its protease activity. In turn, interacts with vaccinia virus DNA-binding protein OPG079 in the cytoplasm and promotes its degradation without the need of its protease activity but through autophagy. The sequence is that of Serine protease FAM111A from Homo sapiens (Human).